A 462-amino-acid polypeptide reads, in one-letter code: Microspherule protein 1 (462 aa).

The residue at position 1 (Met1) is an N-acetylmethionine. Residues 1-130 (MDKDSQGLLD…KSKQPLQVTK (130 aa)) are disordered. Phosphoserine is present on Ser22. The segment covering 43–55 (PKRRSSSRFIKRK) has biased composition (basic residues). Low complexity predominate over residues 81–90 (SGRCSGSEPS). Ser102 is subject to Phosphoserine. At Thr103 the chain carries Phosphothreonine. The span at 103–112 (TPVPPSPAPT) shows a compositional bias: pro residues. Ser108 is modified (phosphoserine). Residues 113-123 (PGLTKRVKKSK) carry the Nuclear localization signal motif. Lys123 and Lys130 each carry N6-acetyllysine. A Phosphoserine modification is found at Ser282. Residues 301 to 335 (LEHELTVADRRQKREIRQLEQELHKWQVLVDSITG) are a coiled coil. The FHA domain maps to 363–419 (ITLGRATKDNQIDVDLSLEGPAWKISRKQGVIKLKNNGDFFIANEGRRPIYIDGRPV). A UBR5-degron motif is present at residues 389 to 396 (RKQGVIKL).

In terms of assembly, component of the chromatin remodeling INO80 complex; specifically part of a complex module associated with the N-terminus of INO80. Component of some MLL1/MLL complex, at least composed of the core components KMT2A/MLL1, ASH2L, HCFC1, WDR5 and RBBP5, as well as the facultative components BACC1, CHD8, E2F6, HSP70, INO80C, KANSL1, LAS1L, MAX, MCRS1, MGA, KAT8/MOF, PELP1, PHF20, PRP31, RING2, RUVB1/TIP49A, RUVB2/TIP49B, SENP3, TAF1, TAF4, TAF6, TAF7, TAF9 and TEX10. Component of the NSL complex at least composed of MOF/KAT8, KANSL1, KANSL2, KANSL3, MCRS1, PHF20, OGT1/OGT, WDR5 and HCFC1. Interacts with NOP2. Interacts with PINX1. Interacts with TERT. Interacts with CCDC85B. Interacts with DAXX. Interacts (via N-terminus) with FMR1 (via phosphorylated form). Interacts with FXR1 and FXR2. Interacts (via C-terminus) with NDE1 (via C-terminus); phosphorylation of NDE1 inhibits the interaction. Interacts (via C-terminus) with ZNF375. Interacts (via C-terminus) with active GTP-bound RHEB (via N-terminus) under conditions of high amino acid concentration; the interaction promotes mTORC1 complex activation by RHEB. Interacts (via N-terminus) with the mTORC1 complex; the interaction ensures mTORC1 activation by RHEB. Interacts with DYNC1I1; the interaction is required for the proper distribution of centriolar satellites. Interacts with TTBK2; the interaction is required for recruitment of TTBK2 to the mother centriole. Interacts with KIF2A; the interaction occurs during mitosis and facilitates chromosome alignment. Ubiquitinated by UBR5 when not assembled in the INO80 complex, leading to its degradation: UBR5 recognizes and binds a degron that is not accessible when MCRS1 is part of the INO80 complex. In terms of processing, phosphorylated by AURKA on Ser-35 and/or Ser-36 during mitosis which is required for kinetochore fiber assembly and mitotic progression but not for spindle localization or for chromosome-induced microtuble aster formation. Also phosphorylated by AURKA on Ser-85 and/or Ser-87. Phosphorylated by TTK/MPS1 which enhances recruitment of KIF2A to the minus end of spindle microtubules and facilitates precise chromosome segregation.

It localises to the nucleus. Its subcellular location is the nucleolus. The protein localises to the cytoplasm. It is found in the cytoskeleton. The protein resides in the microtubule organizing center. It localises to the centrosome. Its subcellular location is the spindle pole. The protein localises to the chromosome. It is found in the centromere. The protein resides in the kinetochore. It localises to the lysosome. Its subcellular location is the centriolar satellite. Modulates the transcription repressor activity of DAXX by recruiting it to the nucleolus. As part of the NSL complex it may be involved in acetylation of nucleosomal histone H4 on several lysine residues. Putative regulatory component of the chromatin remodeling INO80 complex which is involved in transcriptional regulation, DNA replication and probably DNA repair. May also be an inhibitor of TERT telomerase activity. Binds to G-quadruplex structures in mRNA. Binds to RNA homomer poly(G) and poly(U). Maintains RHEB at the lysosome in its active GTP-bound form and prevents its interaction with the mTORC1 complex inhibitor TSC2, ensuring activation of the mTORC1 complex by RHEB. Stabilizes the minus ends of kinetochore fibers by protecting them from depolymerization, ensuring functional spindle assembly during mitosis. Following phosphorylation by TTK/MPS1, enhances recruitment of KIF2A to the minus ends of mitotic spindle microtubules which promotes chromosome alignment. Regulates the morphology of microtubule minus ends in mitotic spindle by maintaining them in a closed conformation characterized by the presence of an electron-dense cap. Regulates G2/M transition and spindle assembly during oocyte meiosis. Mediates histone modifications and transcriptional regulation in germinal vesicle oocytes which are required for meiotic progression. Also regulates microtubule nucleation and spindle assembly by activating aurora kinases during oocyte meiosis. Contributes to the establishment of centriolar satellites and also plays a role in primary cilium formation by recruiting TTBK2 to the mother centriole which is necessary for removal of the CP110 cap from the mother centriole, an early step in ciliogenesis. Required for epiblast development during early embryogenesis. Essential for cell viability. The protein is Microspherule protein 1 (Mcrs1) of Mus musculus (Mouse).